The following is a 281-amino-acid chain: Insecticidal crystal toxin protein (281 aa).

Antigenic epitope regions lie at residues 54-78 (NYSH…VYTF), 91-104 (IYTH…AVKA), 108-116 (GTASKVVQG), 131-148 (FKIT…FIRI), 160-172 (AVIN…VAEL), 189-196 (KYKDFQYL), 208-216 (QNISLVFNR), 221-236 (TNTT…LPIT), and 247-256 (KLETVQQIIN).

Belongs to the delta endotoxin family.

In terms of biological role, promotes colloidosmotic lysis by binding to the midgut epithelial cells of insects. Active against Mamestra brassicae. The polypeptide is Insecticidal crystal toxin protein (Bacillus thuringiensis subsp. kurstaki).